Reading from the N-terminus, the 258-residue chain is Ubiquinone/menaquinone biosynthesis C-methyltransferase UbiE (258 aa).

The tract at residues 1-20 (MSESRTSADGGMETSYGFRE) is disordered. Residues Thr81, Asp102, and 130 to 131 (NA) contribute to the S-adenosyl-L-methionine site.

Belongs to the class I-like SAM-binding methyltransferase superfamily. MenG/UbiE family.

The catalysed reaction is a 2-demethylmenaquinol + S-adenosyl-L-methionine = a menaquinol + S-adenosyl-L-homocysteine + H(+). It carries out the reaction a 2-methoxy-6-(all-trans-polyprenyl)benzene-1,4-diol + S-adenosyl-L-methionine = a 5-methoxy-2-methyl-3-(all-trans-polyprenyl)benzene-1,4-diol + S-adenosyl-L-homocysteine + H(+). Its pathway is quinol/quinone metabolism; menaquinone biosynthesis; menaquinol from 1,4-dihydroxy-2-naphthoate: step 2/2. It participates in cofactor biosynthesis; ubiquinone biosynthesis. In terms of biological role, methyltransferase required for the conversion of demethylmenaquinol (DMKH2) to menaquinol (MKH2) and the conversion of 2-polyprenyl-6-methoxy-1,4-benzoquinol (DDMQH2) to 2-polyprenyl-3-methyl-6-methoxy-1,4-benzoquinol (DMQH2). This chain is Ubiquinone/menaquinone biosynthesis C-methyltransferase UbiE, found in Rhizobium etli (strain ATCC 51251 / DSM 11541 / JCM 21823 / NBRC 15573 / CFN 42).